Consider the following 396-residue polypeptide: Putative nickel insertion protein (396 aa).

It belongs to the LarC family.

In Wolinella succinogenes (strain ATCC 29543 / DSM 1740 / CCUG 13145 / JCM 31913 / LMG 7466 / NCTC 11488 / FDC 602W) (Vibrio succinogenes), this protein is Putative nickel insertion protein.